A 265-amino-acid polypeptide reads, in one-letter code: MIKWPWKAQETPQQDNPPWEDALAIPILHSLTTEEQTRLVALAERFLQQKRIVPLQGFELDSLKSARIALLFCLPVLELGIEWLDGFHEVLIYPAPFVVDDEWEDDIGLVHNQRIVQSGQSWQQGPIVLNWVDIRDSFDASGFNLIIHEVAHKLDMRNGDRASGIPLIPLREVAGWEHDLHAAMENIQEEIDLVGETASSIDAYAATDPAECFAVLSEYFFSAPELFAPRFPSLWQRFCQFYGQNPLLRLRNSPNNDASPTTNVH.

Zn(2+)-binding residues include histidine 111, histidine 148, histidine 152, and glutamate 211.

It belongs to the MtfA family. Interacts with Mlc. Zn(2+) is required as a cofactor.

It is found in the cytoplasm. Involved in the modulation of the activity of the glucose-phosphotransferase system (glucose-PTS). Interacts with the transcriptional repressor Mlc, preventing its interaction with DNA and leading to the modulation of expression of genes regulated by Mlc, including ptsG, which encodes the PTS system glucose-specific EIICB component. Functionally, shows zinc-dependent metallopeptidase activity. The sequence is that of Mlc titration factor A from Escherichia fergusonii (strain ATCC 35469 / DSM 13698 / CCUG 18766 / IAM 14443 / JCM 21226 / LMG 7866 / NBRC 102419 / NCTC 12128 / CDC 0568-73).